A 127-amino-acid polypeptide reads, in one-letter code: Basic leucine zipper transcriptional factor ATF-like 3 (127 aa).

The interval 1 to 72 (MSQGLPAAGS…LHEEYESLEQ (72 aa)) is disordered. 2 positions are modified to phosphoserine: S2 and S31. One can recognise a bZIP domain in the interval 35-98 (DDRKVRRREK…KHLTEALKEH (64 aa)). The interval 37 to 62 (RKVRRREKNRVAAQRSRKKQTQKADK) is basic motif. Positions 58–67 (QKADKLHEEY) are enriched in basic and acidic residues. The leucine-zipper stretch occupies residues 63–91 (LHEEYESLEQENTMLRREIGKLTEELKHL).

This sequence belongs to the bZIP family. In terms of assembly, heterodimer; heterodimerizes with JUN family proteins. Interacts with JUN.

The protein localises to the nucleus. Its function is as follows. AP-1 family transcription factor that controls the differentiation of CD8(+) thymic conventional dendritic cells in the immune system. Required for development of CD8-alpha(+) classical dendritic cells (cDCs) and related CD103(+) dendritic cells that cross-present antigens to CD8 T-cells and produce interleukin-12 (IL12) in response to pathogens. Acts via the formation of a heterodimer with JUN family proteins that recognizes and binds DNA sequence 5'-TGA[CG]TCA-3' and regulates expression of target genes. This is Basic leucine zipper transcriptional factor ATF-like 3 (BATF3) from Homo sapiens (Human).